We begin with the raw amino-acid sequence, 307 residues long: Leucine-rich repeat-containing protein 59 (307 aa).

The residue at position 1 (Met-1) is an N-acetylmethionine. Thr-2 carries the N-acetylthreonine; in Leucine-rich repeat-containing protein 59, N-terminally processed modification. Topologically, residues 2–244 are cytoplasmic; sequence TKTGSKGGNL…KPPPRKHNRS (243 aa). LRR repeat units lie at residues 10–31, 40–62, 63–84, 86–107, and 109–128; these read NLRD…NEVP, KATV…CGLT, HLVK…FGRL, NLQH…FAQL, and NLKW…AKVA. 2 positions are modified to phosphoserine: Ser-23 and Ser-25. Position 73 is an N6-succinyllysine (Lys-73). Lys-135 carries the N6-acetyllysine modification. Residues 148 to 216 are a coiled coil; sequence MKAVQADQER…KASKREQEKK (69 aa). The disordered stretch occupies residues 150 to 242; that stretch reads AVQADQERER…PRKPPPRKHN (93 aa). Residues 154-221 show a composition bias toward basic and acidic residues; the sequence is DQERERQRRL…EQEKKPKKET (68 aa). Residues 229–242 show a composition bias toward basic residues; sequence SGSRPRKPPPRKHN. The helical transmembrane segment at 245–265 threads the bilayer; the sequence is WAVLKGLLLLLLLCVAGGLVV. Residues 266–307 lie on the Lumenal side of the membrane; the sequence is CRVTGLQQQPLCTSVNAIYDNAVQGLRHHEILQWVLQTDSQQ.

As to quaternary structure, can form homodimers. Interacts with SGO1. Interacts with FGF1.

The protein localises to the microsome membrane. It localises to the endoplasmic reticulum membrane. Its subcellular location is the nucleus envelope. Required for nuclear import of FGF1, but not that of FGF2. Might regulate nuclear import of exogenous FGF1 by facilitating interaction with the nuclear import machinery and by transporting cytosolic FGF1 to, and possibly through, the nuclear pores. This Rattus norvegicus (Rat) protein is Leucine-rich repeat-containing protein 59 (Lrrc59).